The chain runs to 199 residues: Transmembrane protein 9B (199 aa).

Residues 1–34 (MASLWCGNLLRLGSGLSMSCLALSVLLLAQLTGA) form the signal peptide. Residue asparagine 61 is glycosylated (N-linked (GlcNAc...) asparagine). The chain crosses the membrane as a helical span at residues 106–126 (IIIYLSILGLLLLYMVYLTLV). Phosphoserine occurs at positions 143 and 190.

It belongs to the TMEM9 family. In terms of processing, N-glycosylated.

Its subcellular location is the lysosome membrane. It is found in the early endosome membrane. Its function is as follows. Enhances production of pro-inflammatory cytokines induced by TNF, IL1B, and TLR ligands. Has a role in TNF activation of both the NF-kappaB and MAPK pathways. This Mus musculus (Mouse) protein is Transmembrane protein 9B (Tmem9b).